We begin with the raw amino-acid sequence, 266 residues long: Ribonuclease 3 (266 aa).

One can recognise an RNase III domain in the interval 34 to 158 (IERCQEILGY…VIAALYIDGG (125 aa)). Position 72 (Glu72) interacts with Mg(2+). The active site involves Asp76. Mg(2+) contacts are provided by Asp144 and Glu147. Glu147 is a catalytic residue. In terms of domain architecture, DRBM spans 185–254 (NHKSVLQQFA…AANALAELHN (70 aa)).

It belongs to the ribonuclease III family. Homodimer. Mg(2+) serves as cofactor.

Its subcellular location is the cytoplasm. The catalysed reaction is Endonucleolytic cleavage to 5'-phosphomonoester.. In terms of biological role, digests double-stranded RNA. Involved in the processing of primary rRNA transcript to yield the immediate precursors to the large and small rRNAs (23S and 16S). Processes some mRNAs, and tRNAs when they are encoded in the rRNA operon. Processes pre-crRNA and tracrRNA of type II CRISPR loci if present in the organism. In Rhodopirellula baltica (strain DSM 10527 / NCIMB 13988 / SH1), this protein is Ribonuclease 3.